The chain runs to 267 residues: MLLVLIDVDGFMGQLYNENGTQTILIPREAVIFYWEKNTAFNILQLFFHGGIDTIFEKTNQRSFSFQSRHIHHFTLDESPLPNSITLPTDTLQAFKACKKIIFQHLVKITKDHEQILLLHKGGPEGEWVRSFNIPNATVQNLNDLCCPSVEKLVLKKKDYISSSIGCPKHIQGSNHCPIFECHVLFKWIQENTFIAQGVLERSSLSYEEAVLFIEHRINMVDNHPFKKDSIKQNQKKKNWIATQFVQHGIYVDNGILTKIYNKYSLF.

This sequence belongs to the asfivirus I267L family.

In African swine fever virus (isolate Tick/Malawi/Lil 20-1/1983) (ASFV), this protein is Protein I267L.